The following is a 171-amino-acid chain: Shikimate kinase (171 aa).

14–19 (GAGKST) lines the ATP pocket. S18 contacts Mg(2+). Residues D36, R60, and G82 each coordinate substrate. An ATP-binding site is contributed by R120. R139 contributes to the substrate binding site. Q156 contributes to the ATP binding site.

This sequence belongs to the shikimate kinase family. Monomer. Mg(2+) is required as a cofactor.

It is found in the cytoplasm. It catalyses the reaction shikimate + ATP = 3-phosphoshikimate + ADP + H(+). It participates in metabolic intermediate biosynthesis; chorismate biosynthesis; chorismate from D-erythrose 4-phosphate and phosphoenolpyruvate: step 5/7. Functionally, catalyzes the specific phosphorylation of the 3-hydroxyl group of shikimic acid using ATP as a cosubstrate. This is Shikimate kinase from Shewanella amazonensis (strain ATCC BAA-1098 / SB2B).